The primary structure comprises 185 residues: MPKPKKGARFGGSASHQKAIFANLATALFEHGRITTTESKAKALRPYAEKLVTHAKAGTLAHRREVLKVIRNKDVVHTLFAEIGPFYADRNGGYTRIIKTIPRKGDNAPMAIIELVKEKTVTSEADRARRVKSSQEAPAAENVVEAVEADATEAEVENADAVVEAIEDETATAADAPEAEEAKKD.

It belongs to the bacterial ribosomal protein bL17 family. As to quaternary structure, part of the 50S ribosomal subunit. Contacts protein L32.

The sequence is that of Large ribosomal subunit protein bL17 from Rhodococcus erythropolis (strain PR4 / NBRC 100887).